Here is a 330-residue protein sequence, read N- to C-terminus: GMP reductase (330 aa).

Catalysis depends on Cys-180, which acts as the Thioimidate intermediate. NADP(+) is bound at residue 209–232 (LIADGGIRHNGDIAKSVRFGASMV).

This sequence belongs to the IMPDH/GMPR family. GuaC type 2 subfamily.

It catalyses the reaction IMP + NH4(+) + NADP(+) = GMP + NADPH + 2 H(+). Functionally, catalyzes the irreversible NADPH-dependent deamination of GMP to IMP. It functions in the conversion of nucleobase, nucleoside and nucleotide derivatives of G to A nucleotides, and in maintaining the intracellular balance of A and G nucleotides. This Lactobacillus acidophilus (strain ATCC 700396 / NCK56 / N2 / NCFM) protein is GMP reductase.